Consider the following 359-residue polypeptide: 4-hydroxy-3-methylbut-2-en-1-yl diphosphate synthase (flavodoxin) (359 aa).

Residues C264, C267, C299, and E306 each contribute to the [4Fe-4S] cluster site.

Belongs to the IspG family. It depends on [4Fe-4S] cluster as a cofactor.

It catalyses the reaction (2E)-4-hydroxy-3-methylbut-2-enyl diphosphate + oxidized [flavodoxin] + H2O + 2 H(+) = 2-C-methyl-D-erythritol 2,4-cyclic diphosphate + reduced [flavodoxin]. The protein operates within isoprenoid biosynthesis; isopentenyl diphosphate biosynthesis via DXP pathway; isopentenyl diphosphate from 1-deoxy-D-xylulose 5-phosphate: step 5/6. Converts 2C-methyl-D-erythritol 2,4-cyclodiphosphate (ME-2,4cPP) into 1-hydroxy-2-methyl-2-(E)-butenyl 4-diphosphate. The chain is 4-hydroxy-3-methylbut-2-en-1-yl diphosphate synthase (flavodoxin) from Helicobacter pylori (strain HPAG1).